Consider the following 359-residue polypeptide: Peptide chain release factor 1 (359 aa).

Q236 bears the N5-methylglutamine mark.

It belongs to the prokaryotic/mitochondrial release factor family. In terms of processing, methylated by PrmC. Methylation increases the termination efficiency of RF1.

It localises to the cytoplasm. Functionally, peptide chain release factor 1 directs the termination of translation in response to the peptide chain termination codons UAG and UAA. The chain is Peptide chain release factor 1 from Streptococcus agalactiae.